Reading from the N-terminus, the 325-residue chain is Peroxidase 47 (325 aa).

The first 36 residues, 1 to 36 (MLTRFKKQNNKMVRANIVSMVLLMHAIVGFPFHARG), serve as a signal peptide directing secretion. 4 disulfide bridges follow: Cys46/Cys125, Cys79/Cys84, Cys131/Cys321, and Cys209/Cys235. The Proton acceptor role is filled by His77. The Ca(2+) site is built by Asp78, Gly83, Asp85, and Ser87. Residue Pro172 coordinates substrate. N-linked (GlcNAc...) asparagine glycosylation is present at Asn177. His202 is a binding site for heme b. Thr203 contributes to the Ca(2+) binding site. Asp246, Thr248, and Asp253 together coordinate Ca(2+).

It belongs to the peroxidase family. Classical plant (class III) peroxidase subfamily. It depends on heme b as a cofactor. Ca(2+) is required as a cofactor.

The protein localises to the secreted. It carries out the reaction 2 a phenolic donor + H2O2 = 2 a phenolic radical donor + 2 H2O. In terms of biological role, removal of H(2)O(2), oxidation of toxic reductants, biosynthesis and degradation of lignin, suberization, auxin catabolism, response to environmental stresses such as wounding, pathogen attack and oxidative stress. These functions might be dependent on each isozyme/isoform in each plant tissue. This is Peroxidase 47 (PER47) from Arabidopsis thaliana (Mouse-ear cress).